Consider the following 406-residue polypeptide: Acetylornithine/succinyldiaminopimelate aminotransferase (406 aa).

Residues 108-109 (GT) and F141 each bind pyridoxal 5'-phosphate. R144 provides a ligand contact to N(2)-acetyl-L-ornithine. 226-229 (DEVQ) contributes to the pyridoxal 5'-phosphate binding site. N6-(pyridoxal phosphate)lysine is present on K255. S283 serves as a coordination point for N(2)-acetyl-L-ornithine. T284 contributes to the pyridoxal 5'-phosphate binding site.

This sequence belongs to the class-III pyridoxal-phosphate-dependent aminotransferase family. ArgD subfamily. Homodimer. The cofactor is pyridoxal 5'-phosphate.

It localises to the cytoplasm. The enzyme catalyses N(2)-acetyl-L-ornithine + 2-oxoglutarate = N-acetyl-L-glutamate 5-semialdehyde + L-glutamate. The catalysed reaction is N-succinyl-(2S,6S)-2,6-diaminopimelate + 2-oxoglutarate = (S)-2-succinylamino-6-oxoheptanedioate + L-glutamate. The protein operates within amino-acid biosynthesis; L-arginine biosynthesis; N(2)-acetyl-L-ornithine from L-glutamate: step 4/4. It functions in the pathway amino-acid biosynthesis; L-lysine biosynthesis via DAP pathway; LL-2,6-diaminopimelate from (S)-tetrahydrodipicolinate (succinylase route): step 2/3. In terms of biological role, involved in both the arginine and lysine biosynthetic pathways. The sequence is that of Acetylornithine/succinyldiaminopimelate aminotransferase from Escherichia coli O157:H7.